A 106-amino-acid polypeptide reads, in one-letter code: UPF0060 membrane protein Mrad2831_0929 (106 aa).

A run of 4 helical transmembrane segments spans residues 3–23 (LLAY…FWAW), 30–50 (AWWT…LTLV), 59–79 (FAAY…LAEG), and 87–104 (LAGS…LLGR).

This sequence belongs to the UPF0060 family.

The protein resides in the cell inner membrane. This chain is UPF0060 membrane protein Mrad2831_0929, found in Methylobacterium radiotolerans (strain ATCC 27329 / DSM 1819 / JCM 2831 / NBRC 15690 / NCIMB 10815 / 0-1).